We begin with the raw amino-acid sequence, 260 residues long: Membrane protein insertase YidC 1 (260 aa).

Positions 1–22 (MLKSYRAVLVSLSLLFVFVLSG) are cleaved as a signal peptide. C23 carries N-palmitoyl cysteine lipidation. C23 is lipidated: S-diacylglycerol cysteine. The next 5 helical transmembrane spans lie at 29 to 49 (IDAH…SFMI), 52 to 72 (VAHH…TLVI), 133 to 153 (LAGC…YYAI), 164 to 184 (FLWV…IAAL), and 213 to 233 (MPAM…LYWI).

The protein belongs to the OXA1/ALB3/YidC family. Type 2 subfamily.

Its subcellular location is the cell membrane. Required for the insertion and/or proper folding and/or complex formation of integral membrane proteins into the membrane. Involved in integration of membrane proteins that insert both dependently and independently of the Sec translocase complex, as well as at least some lipoproteins. In Bacillus cereus (strain ATCC 14579 / DSM 31 / CCUG 7414 / JCM 2152 / NBRC 15305 / NCIMB 9373 / NCTC 2599 / NRRL B-3711), this protein is Membrane protein insertase YidC 1.